A 354-amino-acid polypeptide reads, in one-letter code: Glycerol-1-phosphate dehydrogenase [NAD(P)+] (354 aa).

Residues 103-107 (GRAVD) and 125-128 (TAAS) each bind NAD(+). Asp-130 serves as a coordination point for substrate. NAD(+) is bound at residue Ser-134. Asp-176 is a binding site for substrate. Zn(2+)-binding residues include Asp-176 and His-255. A substrate-binding site is contributed by His-259. His-271 contributes to the Zn(2+) binding site.

It belongs to the glycerol-1-phosphate dehydrogenase family. In terms of assembly, homodimer. Zn(2+) is required as a cofactor.

The protein localises to the cytoplasm. It catalyses the reaction sn-glycerol 1-phosphate + NAD(+) = dihydroxyacetone phosphate + NADH + H(+). It carries out the reaction sn-glycerol 1-phosphate + NADP(+) = dihydroxyacetone phosphate + NADPH + H(+). It participates in membrane lipid metabolism; glycerophospholipid metabolism. Catalyzes the NAD(P)H-dependent reduction of dihydroxyacetonephosphate (DHAP or glycerone phosphate) to glycerol 1-phosphate (G1P). The G1P thus generated is used as the glycerophosphate backbone of phospholipids in the cellular membranes of Archaea. In Cenarchaeum symbiosum (strain A), this protein is Glycerol-1-phosphate dehydrogenase [NAD(P)+].